Reading from the N-terminus, the 146-residue chain is Snaclec coagulation factor IX/factor X-binding protein subunit B (146 aa).

The signal sequence occupies residues 1 to 23; that stretch reads MGRFIFLSFGLLVVFLSLSGTGA. Intrachain disulfides connect Cys-25–Cys-36, Cys-53–Cys-142, and Cys-119–Cys-134. One can recognise a C-type lectin domain in the interval 32–143; sequence YEGHCYKPFN…CRMEAYFVCE (112 aa). Ca(2+)-binding residues include Ser-64 and Glu-70. Ca(2+) is bound at residue Glu-143.

It belongs to the snaclec family. As to quaternary structure, heterodimer with subunit A of IX/X-bp or IX-bp; disulfide-linked. As to expression, expressed by the venom gland.

The protein resides in the secreted. When linked to subunit A of IX/X-bp, anticoagulant protein which binds to the gamma-carboxyglutamic acid-domain regions of factors IX (F9) and factor X (F10) in the presence of calcium with a 1 to 1 stoichiometry. In terms of biological role, when linked to subunit A of IX-bp, anticoagulant protein which binds to the gamma-carboxyglutamic acid-domain regions of factor IX (but not to factor X) in the presence of calcium with a 1 to 1 stoichiometry. The polypeptide is Snaclec coagulation factor IX/factor X-binding protein subunit B (Gloydius halys (Chinese water mocassin)).